A 218-amino-acid chain; its full sequence is Glycerol-3-phosphate acyltransferase (218 aa).

5 helical membrane-spanning segments follow: residues 5 to 25, 53 to 73, 80 to 100, 115 to 135, and 138 to 158; these read ALGMIIFAYLCGSISSAILIC, LAAASVLICDVLKGMIPVWLA, PFYLGIVAIAACLGHIYPVFF, IAAIGWDLSGLIAGTWLLTVL, and GYSSLGAIISALLAPFYVWWF.

Belongs to the PlsY family. In terms of assembly, probably interacts with PlsX.

The protein resides in the cell inner membrane. It catalyses the reaction an acyl phosphate + sn-glycerol 3-phosphate = a 1-acyl-sn-glycero-3-phosphate + phosphate. It participates in lipid metabolism; phospholipid metabolism. Catalyzes the transfer of an acyl group from acyl-phosphate (acyl-PO(4)) to glycerol-3-phosphate (G3P) to form lysophosphatidic acid (LPA). This enzyme utilizes acyl-phosphate as fatty acyl donor, but not acyl-CoA or acyl-ACP. This Proteus mirabilis (strain HI4320) protein is Glycerol-3-phosphate acyltransferase.